Consider the following 232-residue polypeptide: MSSGYSSLEEDEDFFFTARTSFFRRAPPGKSRSGQPDVEKEKETHNYLSKEEIKEKVHKYNSAVTDKLKMTLNSNGIYTGFIKVQMELCKPAQPSPEPSSGGCMNTLHISSTNTVGEVIEALLRKFLVTESPTKFALYKRCHREDQVYACKLSDREHPLYLRLVAGPRTDTLSFVLREHEIGEWEAFSLPELQNFLRILDKEEDEQLQSLKRRYTAYRQKLEEALGEVWKPG.

Ser-2 carries the N-acetylserine modification. Positions 25-46 are disordered; sequence RAPPGKSRSGQPDVEKEKETHN. Over residues 37–46 the composition is skewed to basic and acidic residues; it reads DVEKEKETHN. Residues 78-180 form the Ras-associating domain; the sequence is YTGFIKVQME…TLSFVLREHE (103 aa). The region spanning 181–228 is the SARAH domain; it reads IGEWEAFSLPELQNFLRILDKEEDEQLQSLKRRYTAYRQKLEEALGEV.

The protein localises to the cytoplasm. It localises to the cytoskeleton. The sequence is that of Ras association domain-containing protein 3 (Rassf3) from Mus musculus (Mouse).